The chain runs to 778 residues: Protein PHOTOPERIODIC CONTROL OF HYPOCOTYL 1 (778 aa).

3 disordered regions span residues 74–95, 186–283, and 316–335; these read QKRE…VGSS, HNRG…NSAT, and KTSP…KEAS. A compositionally biased stretch (basic and acidic residues) spans 198 to 212; the sequence is SSKDTQEDGPRKNES. Over residues 230–247 the composition is skewed to low complexity; it reads SGSISSSSTKGKGIKGYS. The span at 265-275 shows a compositional bias: basic and acidic residues; that stretch reads PDRENSVDGHQ. Residues 317–326 show a composition bias toward polar residues; the sequence is TSPSDSSETK. Residues 470–505 form the F-box domain; it reads WPLLPNDLLELIMGHLETSFEIFLFRSVCSSWRSVV.

As to quaternary structure, interacts with light-activated phyB. Binds directly to PIF1 and COP1. In terms of processing, ubiquitinated by COP1 in darkness; this leads to proteasomal degradation. Mainly expressed in cotyledons, hypocotyls, leaves and roots.

Its subcellular location is the nucleus. Its function is as follows. Together with PCHL, regulates growth and development adaptation to the ambient environment by controlling negatively phytochrome B (phyB) dark reversion, a temperature-dependent thermal relaxation process during which phyB reverts from the active to the inactive state. Contributes to red (R) light-triggered photomorphogenesis. Promotes various light responses such as seed germination, hypocotyl gravitropism and chlorophyll biosynthesis, via direct interaction with PIF1 and COP1. Prevents DNA-binding ability of PIF1 to negatively regulate the expressions of its target genes. Facilitates the physical interaction between phyB and PIF1 and the subsequent light-induced degradation of PIF1. In Arabidopsis thaliana (Mouse-ear cress), this protein is Protein PHOTOPERIODIC CONTROL OF HYPOCOTYL 1.